Here is a 113-residue protein sequence, read N- to C-terminus: Endoribonuclease SymE (113 aa).

The SpoVT-AbrB domain maps to 29 to 74; it reads SRYPDYSRIPAITLKGQWLEAAGFATGTAIDVKVMEGCIVLTAQPP.

The protein belongs to the SymE family.

Its subcellular location is the cytoplasm. Functionally, involved in the degradation and recycling of damaged RNA. It is itself a target for degradation by the ATP-dependent protease Lon. This chain is Endoribonuclease SymE, found in Escherichia coli O1:K1 / APEC.